Here is a 315-residue protein sequence, read N- to C-terminus: Initiation factor TFIIB homolog (315 aa).

It belongs to the asfivirus C315R family.

In terms of biological role, putative initation factor. The protein is Initiation factor TFIIB homolog of Ornithodoros (relapsing fever ticks).